Here is a 238-residue protein sequence, read N- to C-terminus: Small ribosomal subunit protein uS2c (238 aa).

Belongs to the universal ribosomal protein uS2 family.

It localises to the plastid. Its subcellular location is the chloroplast. The polypeptide is Small ribosomal subunit protein uS2c (rps2) (Jasminum nudiflorum (Winter jasmine)).